Here is a 331-residue protein sequence, read N- to C-terminus: MARVVFRDARIYLIQWLTKIRHTLNQRQSLNTDKEHLRKIARGMFWLMLLIISAKMAHSLWRYISFSAEYTAVSQPVNKPSRVDAKTFDKNDVQLISQQNWFGKYQPVAAQVKQPEPVPVAETRLNVVLRGIAFGARPGAVIEEGGKQQVYLQGETLGSHNAVIEEINRDHVMLRYQGKIERLSLAEEERSTVAVTNKKAVSDEAKQAVAEPAVSVPVEIPAAVRQALAKDPQKIFNYIQLTPVRKEGIVGYAAKPGADRSLFDASGFKEGDIAIALNQQDFTDPRAMIALMRQLPSMDSIQLTVLRKGARHDISIALRYRLFCPPYWKKS.

Residues 44 to 60 (MFWLMLLIISAKMAHSL) form a helical membrane-spanning segment.

It belongs to the GSP C family.

The protein resides in the cell inner membrane. Its function is as follows. Involved in a type II secretion system (T2SS, formerly general secretion pathway, GSP) for the export of folded proteins across the outer membrane. This is Putative type II secretion system C-type protein YghF from Escherichia coli (strain K12).